The chain runs to 697 residues: DNA ligase (697 aa).

NAD(+)-binding positions include 36-40 (DAEYD), 85-86 (SL), and Glu-123. Lys-125 acts as the N6-AMP-lysine intermediate in catalysis. Positions 146, 182, 320, and 344 each coordinate NAD(+). Residues Cys-438, Cys-441, Cys-456, and Cys-462 each contribute to the Zn(2+) site. The region spanning 619–697 (PQGNTLAGKT…EDGLKALLGV (79 aa)) is the BRCT domain.

It belongs to the NAD-dependent DNA ligase family. LigA subfamily. It depends on Mg(2+) as a cofactor. Requires Mn(2+) as cofactor.

The enzyme catalyses NAD(+) + (deoxyribonucleotide)n-3'-hydroxyl + 5'-phospho-(deoxyribonucleotide)m = (deoxyribonucleotide)n+m + AMP + beta-nicotinamide D-nucleotide.. In terms of biological role, DNA ligase that catalyzes the formation of phosphodiester linkages between 5'-phosphoryl and 3'-hydroxyl groups in double-stranded DNA using NAD as a coenzyme and as the energy source for the reaction. It is essential for DNA replication and repair of damaged DNA. In Bordetella petrii (strain ATCC BAA-461 / DSM 12804 / CCUG 43448), this protein is DNA ligase.